The sequence spans 171 residues: Shikimate kinase (171 aa).

14–19 contributes to the ATP binding site; that stretch reads GAGKST. Position 18 (Ser18) interacts with Mg(2+). Substrate-binding residues include Asp36, Arg60, and Gly82. Arg120 lines the ATP pocket. Arg139 serves as a coordination point for substrate. Gln156 contributes to the ATP binding site.

This sequence belongs to the shikimate kinase family. In terms of assembly, monomer. The cofactor is Mg(2+).

Its subcellular location is the cytoplasm. The enzyme catalyses shikimate + ATP = 3-phosphoshikimate + ADP + H(+). The protein operates within metabolic intermediate biosynthesis; chorismate biosynthesis; chorismate from D-erythrose 4-phosphate and phosphoenolpyruvate: step 5/7. Its function is as follows. Catalyzes the specific phosphorylation of the 3-hydroxyl group of shikimic acid using ATP as a cosubstrate. The chain is Shikimate kinase from Shewanella denitrificans (strain OS217 / ATCC BAA-1090 / DSM 15013).